The sequence spans 195 residues: PRELI domain containing protein 3B (195 aa).

The 172-residue stretch at 1-172 (MKIWTSEHVF…VIHKLNAEIE (172 aa)) folds into the PRELI/MSF1 domain. Phosphoserine is present on residues Ser46 and Ser51.

The protein belongs to the slowmo family.

This chain is PRELI domain containing protein 3B (Prelid3b), found in Mus musculus (Mouse).